A 553-amino-acid chain; its full sequence is uncharacterized protein (553 aa).

5 helical membrane-spanning segments follow: residues 13–30, 37–59, 69–91, 98–120, and 157–179; these read ALQAVVVLSLISAIGLGL, GISLGVTFVFFAGILAGHFGLSI, SFGLIIFVYALGLQVGPGFFSSF, LNMLAIAVVILGTFLAVVCSYTT, and TPALGCAVAYPLGVIGVILAVLL. RCK C-terminal domains are found at residues 190–273 and 281–365; these read LEVQ…LFGE and KEDI…VLGN. 6 helical membrane passes run 375–397, 402–424, 436–458, 468–490, 497–514, and 529–551; these read LVAVFVGIILGLALGAVPFSIPG, VRLGLAGGPIIVGILIGTFGPRL, LMLRALGLSLYLACLGLDAGAHF, LLWIGLGFGLTLVPTVLVGFFAF, FGSVSGMLCGSMANPMAL, and AYATVYPLSMFLRVIIAQVLLMF.

It belongs to the AAE transporter (TC 2.A.81) family.

It is found in the cell membrane. This is an uncharacterized protein from Bacteroides fragilis (strain YCH46).